The following is a 334-amino-acid chain: Holliday junction branch migration complex subunit RuvB (334 aa).

The tract at residues 4–184 (EDRLISGTQK…FGIVQRLEYY (181 aa)) is large ATPase domain (RuvB-L). Residues I23, R24, G65, K68, T69, T70, 131 to 133 (EDY), R174, Y184, and R221 each bind ATP. Residue T69 participates in Mg(2+) binding. The tract at residues 185-255 (DLKSLTRIVL…VAKLALDMLE (71 aa)) is small ATPAse domain (RuvB-S). The segment at 258–334 (NEGFDYMDRK…YLHFGFDKPQ (77 aa)) is head domain (RuvB-H). R313 and R318 together coordinate DNA.

This sequence belongs to the RuvB family. In terms of assembly, homohexamer. Forms an RuvA(8)-RuvB(12)-Holliday junction (HJ) complex. HJ DNA is sandwiched between 2 RuvA tetramers; dsDNA enters through RuvA and exits via RuvB. An RuvB hexamer assembles on each DNA strand where it exits the tetramer. Each RuvB hexamer is contacted by two RuvA subunits (via domain III) on 2 adjacent RuvB subunits; this complex drives branch migration. In the full resolvosome a probable DNA-RuvA(4)-RuvB(12)-RuvC(2) complex forms which resolves the HJ.

It localises to the cytoplasm. It carries out the reaction ATP + H2O = ADP + phosphate + H(+). Its function is as follows. The RuvA-RuvB-RuvC complex processes Holliday junction (HJ) DNA during genetic recombination and DNA repair, while the RuvA-RuvB complex plays an important role in the rescue of blocked DNA replication forks via replication fork reversal (RFR). RuvA specifically binds to HJ cruciform DNA, conferring on it an open structure. The RuvB hexamer acts as an ATP-dependent pump, pulling dsDNA into and through the RuvAB complex. RuvB forms 2 homohexamers on either side of HJ DNA bound by 1 or 2 RuvA tetramers; 4 subunits per hexamer contact DNA at a time. Coordinated motions by a converter formed by DNA-disengaged RuvB subunits stimulates ATP hydrolysis and nucleotide exchange. Immobilization of the converter enables RuvB to convert the ATP-contained energy into a lever motion, pulling 2 nucleotides of DNA out of the RuvA tetramer per ATP hydrolyzed, thus driving DNA branch migration. The RuvB motors rotate together with the DNA substrate, which together with the progressing nucleotide cycle form the mechanistic basis for DNA recombination by continuous HJ branch migration. Branch migration allows RuvC to scan DNA until it finds its consensus sequence, where it cleaves and resolves cruciform DNA. In Psychromonas ingrahamii (strain DSM 17664 / CCUG 51855 / 37), this protein is Holliday junction branch migration complex subunit RuvB.